Here is a 1721-residue protein sequence, read N- to C-terminus: Ras guanine nucleotide exchange factor R (1721 aa).

A coiled-coil region spans residues Gln-148–Ser-279. 6 disordered regions span residues Gln-213–Lys-232, Ser-445–Pro-515, Ala-551–Gln-701, Arg-716–Ser-766, Thr-797–Lys-837, and Asp-929–Ser-981. The span at Lys-216–Lys-232 shows a compositional bias: basic and acidic residues. Low complexity-rich tracts occupy residues Ser-454–Glu-469, His-479–Asn-493, Pro-501–Pro-515, and Ala-551–Ser-581. Positions Asn-618 to Glu-627 are enriched in polar residues. Low complexity-rich tracts occupy residues Ser-628 to Ile-651 and Thr-663 to Asp-686. The segment covering Lys-687 to Gln-701 has biased composition (basic and acidic residues). 3 stretches are compositionally biased toward low complexity: residues Ser-724–Ser-748, Thr-797–Asn-836, and Glu-933–Ser-952. Positions Asn-802–Ile-831 form a coiled coil. The span at Asn-968–Asp-978 shows a compositional bias: polar residues. An N-terminal Ras-GEF domain is found at Gly-1291–Glu-1411. The Ras-GEF domain maps to Asn-1447–Arg-1676.

Post-translationally, phosphorylated on threonine residues.

Functionally, promotes the exchange of Ras-bound GDP by GTP. May also play a role in the activation of rasG. This Dictyostelium discoideum (Social amoeba) protein is Ras guanine nucleotide exchange factor R (gefR).